A 243-amino-acid chain; its full sequence is UPF0246 protein SUB1767 (243 aa).

It belongs to the UPF0246 family.

In Streptococcus uberis (strain ATCC BAA-854 / 0140J), this protein is UPF0246 protein SUB1767.